The primary structure comprises 154 residues: MQAIIQLRGPVNMSGAVEDTLAMLNLHRVNHCALVPETETYRGMITKVNEYVAHGEPSVEVLSTVLERRVESENSDETVDETWLEAHTEYDDFDALATALIEEETTLRDQGLSPVLRLHPPRGGHRGQKHPTAEGGQIGVHDTDQINELLEAMR.

The interval 114–139 is disordered; that stretch reads PVLRLHPPRGGHRGQKHPTAEGGQIG. A compositionally biased stretch (basic residues) spans 119–129; it reads HPPRGGHRGQK.

The protein belongs to the universal ribosomal protein uL30 family. As to quaternary structure, part of the 50S ribosomal subunit.

This chain is Large ribosomal subunit protein uL30, found in Haloquadratum walsbyi (strain DSM 16790 / HBSQ001).